Reading from the N-terminus, the 447-residue chain is GTPase Der (447 aa).

EngA-type G domains are found at residues 3–167 (PVIA…FAQR) and 181–354 (IRLA…AAAM). GTP contacts are provided by residues 9-16 (GRPNVGKS), 56-60 (DTGGF), 119-122 (NKAE), 187-194 (GRPNVGKS), 234-238 (DTAGI), and 299-302 (NKWD). The 85-residue stretch at 355–439 (SNLSTPKLTR…PLRIELRSGK (85 aa)) folds into the KH-like domain.

It belongs to the TRAFAC class TrmE-Era-EngA-EngB-Septin-like GTPase superfamily. EngA (Der) GTPase family. As to quaternary structure, associates with the 50S ribosomal subunit.

Functionally, GTPase that plays an essential role in the late steps of ribosome biogenesis. The chain is GTPase Der from Herminiimonas arsenicoxydans.